We begin with the raw amino-acid sequence, 169 residues long: RNA annealing protein YRA2 (169 aa).

In terms of domain architecture, RRM spans 45-119; the sequence is KRLRFTNVPL…GTVTVEIFEQ (75 aa). Residues 119–169 form a disordered region; it reads QERRPDRRRRTQRDNRRGNGRGSRGSHYKRQDRPAMEDELNAELEDYMKSS.

Belongs to the YRA1 family. In terms of assembly, associates with mRNPs.

Its subcellular location is the nucleus. Its function is as follows. Involved in export of poly(A) mRNAs from the nucleus. Recruited to the coding sequences as well as poly-A sites of active genes. In Zygosaccharomyces rouxii (strain ATCC 2623 / CBS 732 / NBRC 1130 / NCYC 568 / NRRL Y-229), this protein is RNA annealing protein YRA2 (YRA2).